The following is a 602-amino-acid chain: NADH-quinone oxidoreductase subunit C/D (602 aa).

Positions 1–192 are NADH dehydrogenase I subunit C; that stretch reads MVNNMTDLTA…DPFELTKAKQ (192 aa). Residues 216-602 form an NADH dehydrogenase I subunit D region; the sequence is DFMFLNLGPN…IDFVMSDVDR (387 aa).

This sequence in the N-terminal section; belongs to the complex I 30 kDa subunit family. It in the C-terminal section; belongs to the complex I 49 kDa subunit family. As to quaternary structure, NDH-1 is composed of 13 different subunits. Subunits NuoB, CD, E, F, and G constitute the peripheral sector of the complex.

It is found in the cell inner membrane. The catalysed reaction is a quinone + NADH + 5 H(+)(in) = a quinol + NAD(+) + 4 H(+)(out). NDH-1 shuttles electrons from NADH, via FMN and iron-sulfur (Fe-S) centers, to quinones in the respiratory chain. The immediate electron acceptor for the enzyme in this species is believed to be ubiquinone. Couples the redox reaction to proton translocation (for every two electrons transferred, four hydrogen ions are translocated across the cytoplasmic membrane), and thus conserves the redox energy in a proton gradient. In Klebsiella pneumoniae (strain 342), this protein is NADH-quinone oxidoreductase subunit C/D.